Reading from the N-terminus, the 368-residue chain is tRNA-specific 2-thiouridylase MnmA (368 aa).

ATP-binding positions include 23 to 30 (ALSGGVDS) and Leu49. Cys110 serves as the catalytic Nucleophile. Cys110 and Cys209 are joined by a disulfide. Gly135 is an ATP binding site. Residues 159–161 (KDQ) are interaction with tRNA. Cys209 acts as the Cysteine persulfide intermediate in catalysis. Positions 314 to 315 (RY) are interaction with tRNA.

The protein belongs to the MnmA/TRMU family.

The protein resides in the cytoplasm. The enzyme catalyses S-sulfanyl-L-cysteinyl-[protein] + uridine(34) in tRNA + AH2 + ATP = 2-thiouridine(34) in tRNA + L-cysteinyl-[protein] + A + AMP + diphosphate + H(+). Catalyzes the 2-thiolation of uridine at the wobble position (U34) of tRNA, leading to the formation of s(2)U34. In Synechococcus sp. (strain JA-2-3B'a(2-13)) (Cyanobacteria bacterium Yellowstone B-Prime), this protein is tRNA-specific 2-thiouridylase MnmA.